The sequence spans 184 residues: GTP cyclohydrolase 1 (184 aa).

Zn(2+) contacts are provided by Cys75, His78, and Cys146.

Belongs to the GTP cyclohydrolase I family. Homomer.

The enzyme catalyses GTP + H2O = 7,8-dihydroneopterin 3'-triphosphate + formate + H(+). Its pathway is cofactor biosynthesis; 7,8-dihydroneopterin triphosphate biosynthesis; 7,8-dihydroneopterin triphosphate from GTP: step 1/1. In Streptococcus pneumoniae (strain Taiwan19F-14), this protein is GTP cyclohydrolase 1.